We begin with the raw amino-acid sequence, 167 residues long: Putative ripening-related protein 6 (167 aa).

An N-terminal signal peptide occupies residues M1 to A23. The tract at residues K28–E57 is disordered.

Belongs to the kiwellin family.

Its subcellular location is the secreted. The sequence is that of Putative ripening-related protein 6 from Oryza sativa subsp. japonica (Rice).